Reading from the N-terminus, the 442-residue chain is Tryptophan synthase beta chain 2 (442 aa).

N6-(pyridoxal phosphate)lysine is present on Lys-122.

This sequence belongs to the TrpB family. As to quaternary structure, tetramer of two alpha and two beta chains. It depends on pyridoxal 5'-phosphate as a cofactor.

The enzyme catalyses (1S,2R)-1-C-(indol-3-yl)glycerol 3-phosphate + L-serine = D-glyceraldehyde 3-phosphate + L-tryptophan + H2O. The protein operates within amino-acid biosynthesis; L-tryptophan biosynthesis; L-tryptophan from chorismate: step 5/5. The beta subunit is responsible for the synthesis of L-tryptophan from indole and L-serine. The protein is Tryptophan synthase beta chain 2 (trpB2) of Methanosarcina acetivorans (strain ATCC 35395 / DSM 2834 / JCM 12185 / C2A).